The following is a 978-amino-acid chain: uncharacterized protein (978 aa).

Residues 1-27 (MHSWKKKLVVSQLALACTLAITSQANA) form the signal peptide. In terms of domain architecture, Autotransporter spans 713–978 (GLADNGGAWV…SANVGVKYTW (266 aa)).

This is an uncharacterized protein from Salmonella typhimurium (strain LT2 / SGSC1412 / ATCC 700720).